A 1382-amino-acid chain; its full sequence is DNA-directed RNA polymerase subunit beta (1382 aa).

The protein belongs to the RNA polymerase beta chain family. As to quaternary structure, the RNAP catalytic core consists of 2 alpha, 1 beta, 1 beta' and 1 omega subunit. When a sigma factor is associated with the core the holoenzyme is formed, which can initiate transcription.

The enzyme catalyses RNA(n) + a ribonucleoside 5'-triphosphate = RNA(n+1) + diphosphate. Functionally, DNA-dependent RNA polymerase catalyzes the transcription of DNA into RNA using the four ribonucleoside triphosphates as substrates. The chain is DNA-directed RNA polymerase subunit beta from Anaplasma marginale (strain Florida).